Reading from the N-terminus, the 330-residue chain is Beta-ketoacyl-[acyl-carrier-protein] synthase III (330 aa).

Residues Cys114 and His257 contribute to the active site. Residues 258 to 262 (QANLR) form an ACP-binding region. Asn287 is an active-site residue.

It belongs to the thiolase-like superfamily. FabH family. As to quaternary structure, homodimer.

It is found in the cytoplasm. It carries out the reaction malonyl-[ACP] + acetyl-CoA + H(+) = 3-oxobutanoyl-[ACP] + CO2 + CoA. The protein operates within lipid metabolism; fatty acid biosynthesis. In terms of biological role, catalyzes the condensation reaction of fatty acid synthesis by the addition to an acyl acceptor of two carbons from malonyl-ACP. Catalyzes the first condensation reaction which initiates fatty acid synthesis and may therefore play a role in governing the total rate of fatty acid production. Possesses both acetoacetyl-ACP synthase and acetyl transacylase activities. Its substrate specificity determines the biosynthesis of branched-chain and/or straight-chain of fatty acids. This Nitratidesulfovibrio vulgaris (strain ATCC 29579 / DSM 644 / CCUG 34227 / NCIMB 8303 / VKM B-1760 / Hildenborough) (Desulfovibrio vulgaris) protein is Beta-ketoacyl-[acyl-carrier-protein] synthase III.